We begin with the raw amino-acid sequence, 206 residues long: Small ribosomal subunit protein uS4 (206 aa).

The 61-residue stretch at 96–156 folds into the S4 RNA-binding domain; that stretch reads SRLDNIVYRL…KKSKNQLRIK (61 aa).

The protein belongs to the universal ribosomal protein uS4 family. In terms of assembly, part of the 30S ribosomal subunit. Contacts protein S5. The interaction surface between S4 and S5 is involved in control of translational fidelity.

Functionally, one of the primary rRNA binding proteins, it binds directly to 16S rRNA where it nucleates assembly of the body of the 30S subunit. In terms of biological role, with S5 and S12 plays an important role in translational accuracy. The protein is Small ribosomal subunit protein uS4 of Buchnera aphidicola subsp. Cinara cedri (strain Cc).